The sequence spans 134 residues: Methylglyoxal synthase (134 aa).

The MGS-like domain maps to 1 to 134 (MNIALIAHDN…DWRERVKERG (134 aa)). Substrate contacts are provided by residues H8, K12, 34 to 37 (TGTT), and 54 to 55 (SG). Catalysis depends on D60, which acts as the Proton donor/acceptor. H87 serves as a coordination point for substrate.

Belongs to the methylglyoxal synthase family.

The catalysed reaction is dihydroxyacetone phosphate = methylglyoxal + phosphate. In terms of biological role, catalyzes the formation of methylglyoxal from dihydroxyacetone phosphate. The polypeptide is Methylglyoxal synthase (Alkaliphilus metalliredigens (strain QYMF)).